The chain runs to 352 residues: Phospho-N-acetylmuramoyl-pentapeptide-transferase (352 aa).

Transmembrane regions (helical) follow at residues Y10–L30, T67–L87, N88–V108, L129–N149, Y159–S179, G191–S211, G227–W247, V255–V275, I280–V300, and K329–I349.

It belongs to the glycosyltransferase 4 family. MraY subfamily. It depends on Mg(2+) as a cofactor.

Its subcellular location is the cell inner membrane. The enzyme catalyses UDP-N-acetyl-alpha-D-muramoyl-L-alanyl-gamma-D-glutamyl-meso-2,6-diaminopimeloyl-D-alanyl-D-alanine + di-trans,octa-cis-undecaprenyl phosphate = di-trans,octa-cis-undecaprenyl diphospho-N-acetyl-alpha-D-muramoyl-L-alanyl-D-glutamyl-meso-2,6-diaminopimeloyl-D-alanyl-D-alanine + UMP. The protein operates within cell wall biogenesis; peptidoglycan biosynthesis. In terms of biological role, catalyzes the initial step of the lipid cycle reactions in the biosynthesis of the cell wall peptidoglycan: transfers peptidoglycan precursor phospho-MurNAc-pentapeptide from UDP-MurNAc-pentapeptide onto the lipid carrier undecaprenyl phosphate, yielding undecaprenyl-pyrophosphoryl-MurNAc-pentapeptide, known as lipid I. This is Phospho-N-acetylmuramoyl-pentapeptide-transferase from Campylobacter lari (strain RM2100 / D67 / ATCC BAA-1060).